Consider the following 164-residue polypeptide: Thiol peroxidase (164 aa).

One can recognise a Thioredoxin domain in the interval 16 to 162; sequence LQVGDIAKDF…YEAAINAAKI (147 aa). Cysteine 58 (cysteine sulfenic acid (-SOH) intermediate) is an active-site residue. Cysteine 58 and cysteine 92 form a disulfide bridge.

This sequence belongs to the peroxiredoxin family. Tpx subfamily. In terms of assembly, homodimer.

It catalyses the reaction a hydroperoxide + [thioredoxin]-dithiol = an alcohol + [thioredoxin]-disulfide + H2O. Thiol-specific peroxidase that catalyzes the reduction of hydrogen peroxide and organic hydroperoxides to water and alcohols, respectively. Plays a role in cell protection against oxidative stress by detoxifying peroxides. This is Thiol peroxidase from Streptococcus agalactiae serotype V (strain ATCC BAA-611 / 2603 V/R).